The following is a 260-amino-acid chain: MIPSLWISKTGLDAQQINMNIISNNLANVSTNGFKRSRAVFEDLMYQTIREAGTNSSLETTLPSGLQLGTGVRPVSTERIHTQGNLSKTDASKDVAINGSGFFQVQLPDGNIAYTRDGSFQLDQNGQLVTNSGFPIIPEINIPSNSTNINIARDGVISVVVQGQTQPVLLGQLNLINFVNNSGLESLGENLYQETQASGSPIETTPGLNGTGVLYQGYVETSNVNVAEELVNMIQTQRAYEINSKSISTSDQMLQKLSQL.

This sequence belongs to the flagella basal body rod proteins family. As to quaternary structure, the basal body constitutes a major portion of the flagellar organelle and consists of four rings (L,P,S, and M) mounted on a central rod. The rod consists of about 26 subunits of FlgG in the distal portion, and FlgB, FlgC and FlgF are thought to build up the proximal portion of the rod with about 6 subunits each.

The protein resides in the bacterial flagellum basal body. The sequence is that of Flagellar basal-body rod protein FlgG (flgG) from Buchnera aphidicola subsp. Acyrthosiphon pisum (strain APS) (Acyrthosiphon pisum symbiotic bacterium).